The sequence spans 435 residues: Aspartate aminotransferase (435 aa).

Pyridoxal 5'-phosphate-binding positions include tyrosine 69 and 100–101 (SL). Substrate is bound at residue 139-141 (YDR). Pyridoxal 5'-phosphate is bound by residues asparagine 189, tyrosine 221, and 254-256 (STS). A substrate-binding site is contributed by arginine 392.

The protein belongs to the class-I pyridoxal-phosphate-dependent aminotransferase family. Pyridoxal 5'-phosphate is required as a cofactor.

The enzyme catalyses L-aspartate + 2-oxoglutarate = oxaloacetate + L-glutamate. In terms of biological role, main aspartate aminotransferase that couples nitrogen assimilation to aspartate synthesis. Has a weak, but significant, side activity toward kynurenine (Kyn). Oxaloacetate and 2-oxoglutarate, but not pyruvate, serve as amino acceptors, while Asp, Glu and Kyn serve as the best amino donors. Essential for axenic growth and survival of M.tuberculosis in macrophages and in mice. The protein is Aspartate aminotransferase of Mycobacterium tuberculosis (strain ATCC 25618 / H37Rv).